Consider the following 39-residue polypeptide: Omega-actinopoditoxin-Mb1a (39 aa).

Intrachain disulfides connect C4–C19, C11–C30, and C18–C38.

Post-translationally, contains 3 disulfide bonds. Expressed by the venom gland.

It localises to the secreted. Its function is as follows. Potent inhibitor of insect, but not mammalian, voltage-gated calcium channels (Cav). In Missulena bradleyi (Eastern mouse spider), this protein is Omega-actinopoditoxin-Mb1a.